Here is a 189-residue protein sequence, read N- to C-terminus: MVSAISTVLYVLIPFLVFLFRRIDARAIMVSGIAFYPFHLFLPMIVVFITGIPLILKSKGVYITLDGIGMENPDFSDALLVIDTMLFQIMLLQPFITLIYSRGVDLKIQDVRLILGTPLRRRILSSLFAFVIAGIALPEIVLLNFSGILHVDYLFFVHLIASSVFANLLVPSDSSKTSLVVFYLWVYIS.

5 helical membrane passes run 4–21, 34–56, 79–101, 122–144, and 148–170; these read AIST…FLFR, AFYP…PLIL, LLVI…LIYS, RILS…VLLN, and ILHV…NLLV.

It is found in the cell membrane. This is an uncharacterized protein from Archaeoglobus fulgidus (strain ATCC 49558 / DSM 4304 / JCM 9628 / NBRC 100126 / VC-16).